Here is a 189-residue protein sequence, read N- to C-terminus: Pyridoxal 5'-phosphate synthase subunit PdxT (189 aa).

Residue 47–49 (GES) participates in L-glutamine binding. Catalysis depends on Cys79, which acts as the Nucleophile. L-glutamine-binding positions include Arg105 and 132–133 (IR). Catalysis depends on charge relay system residues His168 and Glu170.

It belongs to the glutaminase PdxT/SNO family. As to quaternary structure, in the presence of PdxS, forms a dodecamer of heterodimers. Only shows activity in the heterodimer.

It catalyses the reaction aldehydo-D-ribose 5-phosphate + D-glyceraldehyde 3-phosphate + L-glutamine = pyridoxal 5'-phosphate + L-glutamate + phosphate + 3 H2O + H(+). It carries out the reaction L-glutamine + H2O = L-glutamate + NH4(+). It functions in the pathway cofactor biosynthesis; pyridoxal 5'-phosphate biosynthesis. Functionally, catalyzes the hydrolysis of glutamine to glutamate and ammonia as part of the biosynthesis of pyridoxal 5'-phosphate. The resulting ammonia molecule is channeled to the active site of PdxS. In Methanocorpusculum labreanum (strain ATCC 43576 / DSM 4855 / Z), this protein is Pyridoxal 5'-phosphate synthase subunit PdxT.